Consider the following 1534-residue polypeptide: Activating signal cointegrator 1 complex subunit 3 (1534 aa).

A Helicase ATP-binding 1 domain is found at Glu83 to Leu267. Position 96-103 (Ala96–Thr103) interacts with ATP. Residues Asp209–His212 carry the DEVH box motif. Residues Gln294–Ile500 enclose the Helicase C-terminal 1 domain. Residues Ser576–Phe849 enclose the SEC63 1 domain. The Helicase ATP-binding 2 domain occupies His898 to Phe1073. Ala911–Thr918 serves as a coordination point for ATP. A DEIH box motif is present at residues Asp1015–His1018. A Helicase C-terminal 2 domain is found at Pro1106 to Met1313. The 108-residue stretch at Pro1374–Leu1481 folds into the SEC63 2 domain.

It belongs to the helicase family.

Its subcellular location is the nucleus. The protein localises to the nucleus speckle. It is found in the cytoplasm. The protein resides in the cytosol. The enzyme catalyses Couples ATP hydrolysis with the unwinding of duplex DNA by translocating in the 3'-5' direction.. It carries out the reaction ATP + H2O = ADP + phosphate + H(+). 3'-5' DNA helicase involved in repair of alkylated DNA. Promotes DNA unwinding to generate single-stranded substrate needed for alkbh3, enabling alkbh3 to process alkylated N3-methylcytosine (3mC) within double-stranded regions. Also involved in activation of the ribosome quality control (RQC) pathway, a pathway that degrades nascent peptide chains during problematic translation. Drives the splitting of stalled ribosomes. The sequence is that of Activating signal cointegrator 1 complex subunit 3 (ascc3) from Danio rerio (Zebrafish).